The primary structure comprises 385 residues: Pre-mRNA-splicing factor slt-11 (385 aa).

The segment at 157–233 (RKGREVDEEG…PPGPKDWLPP (77 aa)) is disordered. Over residues 171–187 (GSSSGAGRATGGNPAVG) the composition is skewed to low complexity. One can recognise an RRM domain in the interval 239–312 (MSLFVTGIED…CPLRVRWSVP (74 aa)). The segment covering 320 to 331 (KEQRSEMLRDGR) has biased composition (basic and acidic residues). Residues 320–370 (KEQRSEMLRDGRSAFGSGQKTGGQKAIGGQNAQGGASGAQKDDASNLTIAA) are disordered.

The protein belongs to the SLT11 family. Associated with the spliceosome.

The protein resides in the nucleus. In terms of biological role, involved in pre-mRNA splicing. Facilitates the cooperative formation of U2/U6 helix II in association with stem II in the spliceosome. Binds to RNA. In Neurospora crassa (strain ATCC 24698 / 74-OR23-1A / CBS 708.71 / DSM 1257 / FGSC 987), this protein is Pre-mRNA-splicing factor slt-11 (slt-11).